A 160-amino-acid polypeptide reads, in one-letter code: Transcription factor 12 (160 aa).

A disordered region spans residues 1 to 58 (NKEKDENLHEPPSSDDMKSDDESSQKDIKVSSRGRTSTNEDEDLNPEQKIEREKERRM). A compositionally biased stretch (basic and acidic residues) spans 15-30 (DDMKSDDESSQKDIKV). Ser-19 is modified (phosphoserine). Residue Lys-29 forms a Glycyl lysine isopeptide (Lys-Gly) (interchain with G-Cter in SUMO2) linkage. A Phosphothreonine modification is found at Thr-36. The residue at position 37 (Ser-37) is a Phosphoserine. Residues 46–58 (PEQKIEREKERRM) are compositionally biased toward basic and acidic residues. One can recognise a bHLH domain in the interval 55-108 (ERRMANNARERLRVRDINEAFKELGRMCQLHLKSEKPQTKLLILHQAVAVILSL). Glycyl lysine isopeptide (Lys-Gly) (interchain with G-Cter in SUMO2) cross-links involve residues Lys-87 and Lys-131. A class A specific domain region spans residues 110 to 133 (QQVRERNLNPKAACLKRREEEKVS). Positions 132-160 (VSVVSAEPPTTLPGTHPGLSETTNPMGHM) are disordered. Low complexity predominate over residues 139–150 (PPTTLPGTHPGL). Positions 151–160 (SETTNPMGHM) are enriched in polar residues.

In terms of assembly, efficient DNA binding requires dimerization with another bHLH protein. Forms homo- or heterooligomers with myogenin, E12 and ITF2 proteins. Interacts with PTF1A. Interacts with RUNX1T1. Interacts with NEUROD2. Interacts with BHLHA9.

It localises to the nucleus. In terms of biological role, transcriptional regulator. Involved in the initiation of neuronal differentiation. Activates transcription by binding to the E box (5'-CANNTG-3'). May be involved in the functional network that regulates the development of the GnRH axis. The polypeptide is Transcription factor 12 (TCF12) (Papio hamadryas (Hamadryas baboon)).